A 969-amino-acid chain; its full sequence is Protein translocase subunit SecA (969 aa).

ATP-binding positions include glutamine 99, 117–121 (GEGKT), and aspartate 631.

Belongs to the SecA family. In terms of assembly, monomer and homodimer. Part of the essential Sec protein translocation apparatus which comprises SecA, SecYEG and auxiliary proteins SecDF. Other proteins may also be involved.

The protein resides in the cell inner membrane. Its subcellular location is the cytoplasm. The enzyme catalyses ATP + H2O + cellular proteinSide 1 = ADP + phosphate + cellular proteinSide 2.. Its function is as follows. Part of the Sec protein translocase complex. Interacts with the SecYEG preprotein conducting channel. Has a central role in coupling the hydrolysis of ATP to the transfer of proteins into and across the cell membrane, serving as an ATP-driven molecular motor driving the stepwise translocation of polypeptide chains across the membrane. The protein is Protein translocase subunit SecA of Chlamydia abortus (strain DSM 27085 / S26/3) (Chlamydophila abortus).